Reading from the N-terminus, the 308-residue chain is Uridylate cyclase (308 aa).

Asp62 and Asp106 together coordinate Mn(2+).

The protein belongs to the adenylyl cyclase class-4/guanylyl cyclase family. Pyrimidine cyclase subfamily. As to quaternary structure, homodimer. Mn(2+) serves as cofactor.

It is found in the cytoplasm. The enzyme catalyses GTP = 3',5'-cyclic GMP + diphosphate. It catalyses the reaction UTP = 3',5'-cyclic UMP + diphosphate. In terms of biological role, pycsar (pyrimidine cyclase system for antiphage resistance) provides immunity against bacteriophage. The pyrimidine cyclase (PycC) synthesizes cyclic nucleotides in response to infection; these serve as specific second messenger signals. The signals activate the adjacent effector, leading to bacterial cell death and abortive phage infection. A clade D Pycsar system. The pyrimidine cyclase gene of a two-gene Pycsar system, generates cyclic UMP (cUMP) from UTP as well as cGMP from GTP to a lesser extent, has little to no activity on ATP or CTP. Expression of this and adjacent effector PtPycTM (AC A0A4Q9KQH5) probably confers resistance to bacteriophage. The genes are probably only expressed in response to bacteriophage infection. The protein is Uridylate cyclase of Propioniciclava tarda.